A 35-amino-acid chain; its full sequence is Turripeptide gsp9a (35 aa).

4-hydroxyproline is present on residues Pro-3 and Pro-4. 3 disulfides stabilise this stretch: Cys-7–Cys-22, Cys-12–Cys-26, and Cys-18–Cys-33. A 4-carboxyglutamate mark is found at Glu-14 and Glu-17.

In terms of tissue distribution, expressed by the venom duct.

It is found in the secreted. The sequence is that of Turripeptide gsp9a from Gemmula speciosa (Splendid gem-turris).